Consider the following 166-residue polypeptide: MAAFATAEACDSNAELISNGDLRALHPIFKIYGQRRCFSGPIVTLKVFEDNVLVRNQLETKGEGGVLVIDGGGSMRCALVGGNLGQLAQNNGWSGIVVNGCVRDVDEINDCDVGVRALGSNPLKSTKKGHGEKNVPVHIGGTLIRDGEWLYADSDGILISKTELSV.

An N-acetylalanine modification is found at Ala-2. Substrate contacts are provided by residues 81–84 (GGNL) and Arg-103. Asp-104 is a binding site for a divalent metal cation.

Belongs to the class II aldolase/RraA-like family. In terms of assembly, homotrimer. A divalent metal cation is required as a cofactor.

The catalysed reaction is 4-hydroxy-4-methyl-2-oxoglutarate = 2 pyruvate. It carries out the reaction oxaloacetate + H(+) = pyruvate + CO2. In terms of biological role, catalyzes the aldol cleavage of 4-hydroxy-4-methyl-2-oxoglutarate (HMG) into 2 molecules of pyruvate. Also contains a secondary oxaloacetate (OAA) decarboxylase activity due to the common pyruvate enolate transition state formed following C-C bond cleavage in the retro-aldol and decarboxylation reactions. In Arabidopsis thaliana (Mouse-ear cress), this protein is Putative 4-hydroxy-4-methyl-2-oxoglutarate aldolase 3.